The sequence spans 316 residues: Pantothenate kinase (316 aa).

95–102 (GSVAVGKS) provides a ligand contact to ATP.

It belongs to the prokaryotic pantothenate kinase family.

It is found in the cytoplasm. It catalyses the reaction (R)-pantothenate + ATP = (R)-4'-phosphopantothenate + ADP + H(+). It participates in cofactor biosynthesis; coenzyme A biosynthesis; CoA from (R)-pantothenate: step 1/5. The chain is Pantothenate kinase from Shigella dysenteriae serotype 1 (strain Sd197).